Here is a 527-residue protein sequence, read N- to C-terminus: Coiled-coil domain-containing protein 148 (527 aa).

2 coiled-coil regions span residues 289–353 (LAKD…TEIK) and 401–438 (LEKR…VAVQ).

The protein is Coiled-coil domain-containing protein 148 (Ccdc148) of Mus musculus (Mouse).